We begin with the raw amino-acid sequence, 88 residues long: Small cysteine-rich outer membrane protein OmcA (88 aa).

Positions 1 to 18 (MKKTALLAALCSVVSLSS) are cleaved as a signal peptide. The N-palmitoyl cysteine moiety is linked to residue cysteine 19. A lipid anchor (S-diacylglycerol cysteine) is attached at cysteine 19. The tract at residues 67 to 88 (THQDAEHGPQAREIPVDGKCRQ) is disordered.

In terms of assembly, part of a disulfide cross-linked outer membrane complex (COMC) composed of the major outer membrane porin (MOMP), the small cysteine-rich protein (OmcA) and the large cysteine-rich periplasmic protein (OmcB).

Its subcellular location is the cell outer membrane. In terms of biological role, in elementary bodies (EBs, the infectious stage, which is able to survive outside the host cell) provides the structural integrity of the outer envelope through disulfide cross-links with the large cysteine-rich periplasmic protein and the major outer membrane porin. It has been described in publications as the Sarkosyl-insoluble COMC (Chlamydia outer membrane complex), and serves as the functional equivalent of peptidoglycan. This Chlamydia trachomatis serovar L2 (strain ATCC VR-902B / DSM 19102 / 434/Bu) protein is Small cysteine-rich outer membrane protein OmcA (omcA).